The following is a 529-amino-acid chain: Snake venom 5'-nucleotidase (529 aa).

Residue G1 is a signal peptide. D12 and H14 together coordinate Zn(2+). Cysteines 27 and 32 form a disulfide. D60, N92, H195, and H218 together coordinate Zn(2+). Residues N308 and N322 are each glycosylated (N-linked (GlcNAc...) asparagine). 2 disulfide bridges follow: C328/C333 and C340/C362. An AMP-binding site is contributed by R329. 3 residues coordinate AMP: N365, R370, and F393. A disulfide bridge links C452 with C455. AMP-binding residues include F476 and D482. S525 is lipidated: GPI-anchor amidated serine. The propeptide at 526-529 (AGSL) is removed in mature form.

Belongs to the 5'-nucleotidase family. Requires Zn(2+) as cofactor. In terms of processing, venom 5'-nucleotidases (or a part thereof) may be released into the venom via exosome-like vesicles. They may be attached via a GPI anchor to the membrane of these vesicles. Soluble forms of 5'-nucleotidase might be released by cleavage of the ectodomain in the exosome-like vesicles or venom gland cells. In terms of tissue distribution, expressed by the venom gland.

It is found in the membrane. It catalyses the reaction a ribonucleoside 5'-phosphate + H2O = a ribonucleoside + phosphate. Its function is as follows. Hydrolyzes nucleotides into nucleosides. Snake venom 5'-nucleotidases are widely distributed among venomous snake taxa, but there is a lack of information about their biological activities. They have been shown to inhibit platelet aggregation. This effect may be due to the liberation of inhibitory AMP or adenosine by its action on ADP released upon initiation of aggregation. Venom 5'-nucleotidases are also known to synergistically act in vivo with other toxins like ADPases, phospholipases, and disintegrins to exert a more pronounced anti-coagulant effect. The polypeptide is Snake venom 5'-nucleotidase (Naja atra (Chinese cobra)).